The chain runs to 319 residues: Ribosomal RNA small subunit methyltransferase H (319 aa).

Residues 37–39 (GGH), Asp56, Leu90, Asp104, and Gln111 contribute to the S-adenosyl-L-methionine site.

This sequence belongs to the methyltransferase superfamily. RsmH family.

Its subcellular location is the cytoplasm. It carries out the reaction cytidine(1402) in 16S rRNA + S-adenosyl-L-methionine = N(4)-methylcytidine(1402) in 16S rRNA + S-adenosyl-L-homocysteine + H(+). In terms of biological role, specifically methylates the N4 position of cytidine in position 1402 (C1402) of 16S rRNA. The sequence is that of Ribosomal RNA small subunit methyltransferase H from Nocardioides sp. (strain ATCC BAA-499 / JS614).